The following is a 67-amino-acid chain: DNA-directed RNA polymerase subunit omega (67 aa).

This sequence belongs to the RNA polymerase subunit omega family. As to quaternary structure, the RNAP catalytic core consists of 2 alpha, 1 beta, 1 beta' and 1 omega subunit. When a sigma factor is associated with the core the holoenzyme is formed, which can initiate transcription.

It carries out the reaction RNA(n) + a ribonucleoside 5'-triphosphate = RNA(n+1) + diphosphate. Promotes RNA polymerase assembly. Latches the N- and C-terminal regions of the beta' subunit thereby facilitating its interaction with the beta and alpha subunits. This is DNA-directed RNA polymerase subunit omega from Leptothrix cholodnii (strain ATCC 51168 / LMG 8142 / SP-6) (Leptothrix discophora (strain SP-6)).